A 331-amino-acid chain; its full sequence is Nacrein-like protein P1 (331 aa).

Residues 1–331 form the Alpha-carbonic anhydrase domain; the sequence is QSPINIVSYD…LHALRNVEGY (331 aa). Zn(2+) is bound by residues His69, His71, and His94. Residues 138 to 240 are disordered; it reads DEPDDEECKR…GENGHKHGCR (103 aa). Positions 144-156 are enriched in basic and acidic residues; sequence ECKRILKGHHPDN. Positions 157-232 are enriched in low complexity; that stretch reads NENGNGDNGN…NNGENGNNGE (76 aa). Tandem repeats lie at residues 162 to 164, 165 to 167, 168 to 170, 171 to 173, 174 to 176, 177 to 179, 180 to 182, 183 to 185, 186 to 188, 189 to 191, 192 to 194, 195 to 197, 198 to 200, 201 to 203, 204 to 206, 207 to 209, 210 to 212, 213 to 215, 216 to 218, 219 to 221, 222 to 224, 225 to 227, 228 to 229, and 231 to 233. Residues 162-233 are 24 X 3 AA approximate tandem repeats of G-X-N; sequence GDNGNNGYNG…NGENGNNGEN (72 aa). 298–299 provides a ligand contact to substrate; it reads TT.

This sequence belongs to the alpha-carbonic anhydrase family. Homooligomer; disulfide-linked. May also be disulfide-linked to insoluble organic matrix. The cofactor is Zn(2+). In terms of tissue distribution, expressed in the mantle.

It is found in the secreted. Its subcellular location is the extracellular space. The protein resides in the extracellular matrix. The catalysed reaction is hydrogencarbonate + H(+) = CO2 + H2O. Functionally, acts as a negative regulator for calcification in the shells of mollusks. May function both as a calcium concentrator and as a carbonic anhydrase required for production of carbonate ions, which are assembled to CaCO(3) at mineralization sites. Is important for shell formation in both the calcitic prismatic layer and the aragonitic nacreous layer. Shows inhibitory activity of crystal formation when present in free state but, when attached to the insoluble matrix, may regulate the form and size of aragonite crystal. The protein is Nacrein-like protein P1 of Mizuhopecten yessoensis (Japanese scallop).